The sequence spans 218 residues: Large ribosomal subunit protein uL4 (218 aa).

A disordered region spans residues 54–106; it reads GTHAVKNRGAVSGGGRKPWKQKGTGRARQGSIRAPQWYHGGVAHGPVPRDYSQ.

This sequence belongs to the universal ribosomal protein uL4 family. As to quaternary structure, part of the 50S ribosomal subunit.

One of the primary rRNA binding proteins, this protein initially binds near the 5'-end of the 23S rRNA. It is important during the early stages of 50S assembly. It makes multiple contacts with different domains of the 23S rRNA in the assembled 50S subunit and ribosome. In terms of biological role, forms part of the polypeptide exit tunnel. This is Large ribosomal subunit protein uL4 from Bifidobacterium animalis subsp. lactis (strain AD011).